The sequence spans 64 residues: Makatoxin-1 (64 aa).

The region spanning 2–64 (RDAYIADSEN…VPIRISGSCR (63 aa)) is the LCN-type CS-alpha/beta domain. 4 disulfide bridges follow: Cys-12–Cys-63, Cys-16–Cys-36, Cys-22–Cys-46, and Cys-26–Cys-48.

In terms of tissue distribution, expressed by the venom gland.

It localises to the secreted. In terms of biological role, this protein markedly relaxes the rat carbachol-precontracted anococcygeus muscle. This relaxation is inhibited by the inhibitor of nitric oxide (NO) synthase, N-nitro-L-arginine methyl ester (L-NAME), suggesting that the response induced by this protein is NO-mediated. This Olivierus martensii (Manchurian scorpion) protein is Makatoxin-1.